Here is a 210-residue protein sequence, read N- to C-terminus: MKELDQLTKGTTTVGILADKGVVLAADRRAVMGNLIAGKQVKKIFRIHDYIGVTTAGSVADAQKIVDLMRAEARLYELRHNRMISARALANMISHVLHSSLKAFRPYLVQLIVGGFNDDDPALYNLDPSGSIIEEDYTATGSGSPTAYGVLEAEYEEGMSLDDAIEVAVRAVKSALERDTGTGEGVTVVTITREEGYRELPEEEVEKLLS.

Positions 1 to 10 (MKELDQLTKG) are cleaved as a propeptide — removed in mature form; by autocatalysis. The active-site Nucleophile is the T11.

Belongs to the peptidase T1B family. As to quaternary structure, the 20S proteasome core is composed of 14 alpha and 14 beta subunits that assemble into four stacked heptameric rings, resulting in a barrel-shaped structure. The two inner rings, each composed of seven catalytic beta subunits, are sandwiched by two outer rings, each composed of seven alpha subunits. The catalytic chamber with the active sites is on the inside of the barrel. Has a gated structure, the ends of the cylinder being occluded by the N-termini of the alpha-subunits. Is capped at one or both ends by the proteasome regulatory ATPase, PAN.

The protein resides in the cytoplasm. The enzyme catalyses Cleavage of peptide bonds with very broad specificity.. Its activity is regulated as follows. The formation of the proteasomal ATPase PAN-20S proteasome complex, via the docking of the C-termini of PAN into the intersubunit pockets in the alpha-rings, triggers opening of the gate for substrate entry. Interconversion between the open-gate and close-gate conformations leads to a dynamic regulation of the 20S proteasome proteolysis activity. In terms of biological role, component of the proteasome core, a large protease complex with broad specificity involved in protein degradation. The sequence is that of Proteasome subunit beta from Methanopyrus kandleri (strain AV19 / DSM 6324 / JCM 9639 / NBRC 100938).